The primary structure comprises 440 residues: Armadillo-like helical domain containing protein 1 (440 aa).

In Homo sapiens (Human), this protein is Armadillo-like helical domain containing protein 1.